The primary structure comprises 122 residues: MGTHLHITAWVLGIILFFVAFALAGKNDKGAKIVHMIVRLLYLIIIATGVELYVRTGMKIPGFGGEYIGKMILGILVIGFMEMTLVRKKKGKSVTGVLIGFIIFAIVTILLGLRLPIGFHIF.

4 helical membrane passes run 5-25 (LHITAWVLGIILFFVAFALAG), 33-53 (IVHMIVRLLYLIIIATGVELY), 60-80 (IPGFGGEYIGKMILGILVIGF), and 93-113 (SVTGVLIGFIIFAIVTILLGL).

The protein belongs to the UPF0344 family.

The protein localises to the cell membrane. This chain is UPF0344 protein BPUM_1008, found in Bacillus pumilus (strain SAFR-032).